The chain runs to 336 residues: Terephthalate 1,2-dioxygenase, reductase component 2 (336 aa).

One can recognise a 2Fe-2S ferredoxin-type domain in the interval 3–91 (HQIHIHDSDI…DIRIHPSSFR (89 aa)). Positions 37, 42, 45, and 75 each coordinate [2Fe-2S] cluster. Residues 98–197 (RKRFTAKVYS…ELPFGSIALK (100 aa)) enclose the FAD-binding FR-type domain.

Monomer. Part of a multicomponent enzyme system composed of a reductase (TphA1I or TphA1II) and a two-subunit oxygenase component (TphA2I or TphA2II and TphA3I or TphA3II). FAD is required as a cofactor. It depends on [2Fe-2S] cluster as a cofactor.

The catalysed reaction is terephthalate + NADH + O2 + H(+) = (3S,4R)-3,4-dihydroxycyclohexa-1,5-diene-1,4-dicarboxylate + NAD(+). In terms of biological role, component of the terephthalate 1,2-dioxygenase multicomponent enzyme system which catalyzes the dioxygenation of terephthalate (TER/TPA) to 1,2-dihydroxy-3,5-cyclohexadiene-1,4-dicarboxylic acid (DCD). TphA1 probably reduces TphA2A3. It can also use 2,5-dicarboxypyridine (PDC) and 1,4-napthalenedicarboxylic acid (NDC) as substrates, and preferentially uses NADPH which is the physiological electron donor. This Comamonas sp protein is Terephthalate 1,2-dioxygenase, reductase component 2 (tphA1II).